A 113-amino-acid polypeptide reads, in one-letter code: Small ribosomal subunit protein uS17 (113 aa).

It belongs to the universal ribosomal protein uS17 family. As to quaternary structure, part of the 30S ribosomal subunit.

Its function is as follows. One of the primary rRNA binding proteins, it binds specifically to the 5'-end of 16S ribosomal RNA. The protein is Small ribosomal subunit protein uS17 of Pyrococcus furiosus (strain ATCC 43587 / DSM 3638 / JCM 8422 / Vc1).